A 260-amino-acid chain; its full sequence is MTLHAQQISLSIGKKQILKDVTFAARAGALSAIVGPNGSGKSTLLKALVAELPSEGQISLNGRLLQDYAAWELASLRGVLPQAAHLAFPFTVLEVVRLGLMAGPEAQNTRLPFEALARVDLEGYAGRSYQELSGGEQQRVQLARVLAQVGAPMREGQPCWLFLDEPVSSLDIAHQLTVMDIARQFADGGGGVVAVMHDLNLTAMYADHVHVMTGGETAGAGTVADVLTDQRLSEVYGCDLRIGKVPADAAVFVLPQTARA.

An ABC transporter domain is found at Leu3–Asp239. An ATP-binding site is contributed by Gly35–Ser42.

This sequence belongs to the ABC transporter superfamily. Heme (hemin) importer (TC 3.A.1.14.5) family. As to quaternary structure, the complex is composed of two ATP-binding proteins (HmuV), two transmembrane proteins (HmuU) and a solute-binding protein (HmuT).

The protein resides in the cell inner membrane. Its function is as follows. Part of the ABC transporter complex HmuTUV involved in hemin import. Responsible for energy coupling to the transport system. This chain is Hemin import ATP-binding protein HmuV, found in Ruegeria sp. (strain TM1040) (Silicibacter sp.).